The primary structure comprises 363 residues: MAIKRNQGHGLPPKRDPALGRDALTTSQALPEDQEQSANEDRIRPQRLGDYLGQKDLKEVLGIAIAAAKARREPLDHMLLYGPPGLGKTTMSLILAAEMGVNCKITAAPALERPRDISGLLVGLEAGDILFIDEIHRLNRMAEELLYPAMEDGRLDVTIGKGVSARTRSIPLKPFTLIGATTKVGALTSPLRDRFGLIQRLRFYEVDELIAIVHRSALILEQPITPEGALEIARRARGTPRIANRLLRRIRDYAQVKGYGEISQTVAATALDLYNVDALGLDWTDRLILETMLNHFGGGPVGLEAIAAATGEDSKTIEEVYEPYLLQIGFLNRTPRGRIVSAKARQHLGLIPVEQSTQLDFLP.

Residues 1-44 are disordered; it reads MAIKRNQGHGLPPKRDPALGRDALTTSQALPEDQEQSANEDRIR. The large ATPase domain (RuvB-L) stretch occupies residues 13–204; it reads PKRDPALGRD…FGLIQRLRFY (192 aa). Residues Ile-43, Arg-44, Gly-85, Lys-88, Thr-89, Thr-90, Arg-194, Tyr-204, and Arg-241 each contribute to the ATP site. Thr-89 contacts Mg(2+). The interval 205–275 is small ATPAse domain (RuvB-S); the sequence is EVDELIAIVH…VAATALDLYN (71 aa). Residues 278–363 are head domain (RuvB-H); sequence ALGLDWTDRL…EQSTQLDFLP (86 aa). Arg-333 and Arg-338 together coordinate DNA.

This sequence belongs to the RuvB family. In terms of assembly, homohexamer. Forms an RuvA(8)-RuvB(12)-Holliday junction (HJ) complex. HJ DNA is sandwiched between 2 RuvA tetramers; dsDNA enters through RuvA and exits via RuvB. An RuvB hexamer assembles on each DNA strand where it exits the tetramer. Each RuvB hexamer is contacted by two RuvA subunits (via domain III) on 2 adjacent RuvB subunits; this complex drives branch migration. In the full resolvosome a probable DNA-RuvA(4)-RuvB(12)-RuvC(2) complex forms which resolves the HJ.

It is found in the cytoplasm. The catalysed reaction is ATP + H2O = ADP + phosphate + H(+). Functionally, the RuvA-RuvB-RuvC complex processes Holliday junction (HJ) DNA during genetic recombination and DNA repair, while the RuvA-RuvB complex plays an important role in the rescue of blocked DNA replication forks via replication fork reversal (RFR). RuvA specifically binds to HJ cruciform DNA, conferring on it an open structure. The RuvB hexamer acts as an ATP-dependent pump, pulling dsDNA into and through the RuvAB complex. RuvB forms 2 homohexamers on either side of HJ DNA bound by 1 or 2 RuvA tetramers; 4 subunits per hexamer contact DNA at a time. Coordinated motions by a converter formed by DNA-disengaged RuvB subunits stimulates ATP hydrolysis and nucleotide exchange. Immobilization of the converter enables RuvB to convert the ATP-contained energy into a lever motion, pulling 2 nucleotides of DNA out of the RuvA tetramer per ATP hydrolyzed, thus driving DNA branch migration. The RuvB motors rotate together with the DNA substrate, which together with the progressing nucleotide cycle form the mechanistic basis for DNA recombination by continuous HJ branch migration. Branch migration allows RuvC to scan DNA until it finds its consensus sequence, where it cleaves and resolves cruciform DNA. The sequence is that of Holliday junction branch migration complex subunit RuvB from Picosynechococcus sp. (strain ATCC 27264 / PCC 7002 / PR-6) (Agmenellum quadruplicatum).